Here is a 204-residue protein sequence, read N- to C-terminus: Ras-related protein RabQ (204 aa).

Residue 12 to 19 (GPPFVGKS) participates in GTP binding. Residues 34 to 42 (MDTTIGVEF) carry the Effector region motif. Residues 60-64 (DTAGQ) and 118-121 (NKCD) each bind GTP. S-geranylgeranyl cysteine attachment occurs at residues Cys-202 and Cys-203.

It belongs to the small GTPase superfamily. Rab family.

Its subcellular location is the cell membrane. The polypeptide is Ras-related protein RabQ (rabQ) (Dictyostelium discoideum (Social amoeba)).